The primary structure comprises 128 residues: Sulfurtransferase TusD (128 aa).

Cys-78 functions as the Cysteine persulfide intermediate in the catalytic mechanism.

This sequence belongs to the DsrE/TusD family. As to quaternary structure, heterohexamer, formed by a dimer of trimers. The hexameric TusBCD complex contains 2 copies each of TusB, TusC and TusD. The TusBCD complex interacts with TusE.

It is found in the cytoplasm. In terms of biological role, part of a sulfur-relay system required for 2-thiolation of 5-methylaminomethyl-2-thiouridine (mnm(5)s(2)U) at tRNA wobble positions. Accepts sulfur from TusA and transfers it in turn to TusE. The polypeptide is Sulfurtransferase TusD (Escherichia coli (strain K12 / MC4100 / BW2952)).